The chain runs to 263 residues: MESSNQPNVLIFDSGVGGLSVFQEINKRLPEVNYYYLFDNQAYPYGELSQETLLARVEALVVKMTQQFAIDLVVIACNTASTIVLPTLRAKLPIPVVGVVPAIKPASLLANRAVGLIATPATVTRQYTHDLIRDFAHEKEVELLGSTRLVDIAEEKLRGRQVDQQELAMILKPMKHKVDVAVLGCTHFPLLKEEIQQVLGDEIILVDSGEAIARRVQSLLHQLSPQSTKTPWRIFSTAQPWDEAALNGSLKTMGFNAIELYPL.

Substrate contacts are provided by residues 13–14 (DS) and 45–46 (YG). Residue Cys77 is the Proton donor/acceptor of the active site. 78-79 (NT) provides a ligand contact to substrate. Cys185 functions as the Proton donor/acceptor in the catalytic mechanism. 186 to 187 (TH) contacts substrate.

The protein belongs to the aspartate/glutamate racemases family.

The enzyme catalyses L-glutamate = D-glutamate. Its pathway is cell wall biogenesis; peptidoglycan biosynthesis. Functionally, provides the (R)-glutamate required for cell wall biosynthesis. This is Glutamate racemase from Vibrio vulnificus (strain CMCP6).